The following is a 96-amino-acid chain: Prokineticin Bm8-d (96 aa).

Residues 1–19 (MKCFAQIVVLLLVIAFSHG) form the signal peptide. 5 disulfides stabilise this stretch: cysteine 26-cysteine 38, cysteine 32-cysteine 50, cysteine 37-cysteine 78, cysteine 60-cysteine 86, and cysteine 80-cysteine 95.

It belongs to the AVIT (prokineticin) family. As to expression, expressed by the skin glands.

Its subcellular location is the secreted. Potent agonist for both PKR1/PROKR1 and PKR2/PROKR2, and inducer of a potent and long-lasting hyperalgesia. Also potentiates capsaicin-induced TRPV1 current, when tested on DRG neurons. At subnanomolar concentrations, this protein both induces potent chemotaxis of macrophages and stimulates LPS-induced production of the pro-inflammatory cytokines IL-1 and IL-12. In vivo, potently stimulates the contraction of the guinea-pig gastrointestinal (GI) smooth muscle (nanomolar concentration). The protein is Prokineticin Bm8-d of Bombina maxima (Giant fire-bellied toad).